Consider the following 176-residue polypeptide: MKAYWYDNKPGDQREPHDSGRPVTVDYLASIGVQYYHFPSLESVNELAKERGYKNRDEIVVSPQAMGDVYEEKVKMFFNEHLHEDEEIRYIRDGEGYFDVRGQEDEWVRIKLAKDDLIILPAGIYHRFTTDDKNYVKAMRLFQEEPKWTPLNRGPDVDENSHRQSYLRTIQNKTVA.

Residues 1–21 (MKAYWYDNKPGDQREPHDSGR) are disordered. Over residues 9 to 20 (KPGDQREPHDSG) the composition is skewed to basic and acidic residues. Residues His-81, His-83, Glu-87, and His-126 each coordinate Fe(2+). 4 residues coordinate Ni(2+): His-81, His-83, Glu-87, and His-126.

This sequence belongs to the acireductone dioxygenase (ARD) family. Requires Fe(2+) as cofactor. The cofactor is Ni(2+).

It localises to the cytoplasm. It is found in the nucleus. The catalysed reaction is 1,2-dihydroxy-5-(methylsulfanyl)pent-1-en-3-one + O2 = 4-methylsulfanyl-2-oxobutanoate + formate + 2 H(+). It catalyses the reaction 1,2-dihydroxy-5-(methylsulfanyl)pent-1-en-3-one + O2 = 3-(methylsulfanyl)propanoate + CO + formate + 2 H(+). It functions in the pathway amino-acid biosynthesis; L-methionine biosynthesis via salvage pathway; L-methionine from S-methyl-5-thio-alpha-D-ribose 1-phosphate: step 5/6. Catalyzes 2 different reactions between oxygen and the acireductone 1,2-dihydroxy-3-keto-5-methylthiopentene (DHK-MTPene) depending upon the metal bound in the active site. Fe-containing acireductone dioxygenase (Fe-ARD) produces formate and 2-keto-4-methylthiobutyrate (KMTB), the alpha-ketoacid precursor of methionine in the methionine recycle pathway. Ni-containing acireductone dioxygenase (Ni-ARD) produces methylthiopropionate, carbon monoxide and formate, and does not lie on the methionine recycle pathway. The sequence is that of Acireductone dioxygenase (adi1) from Aspergillus fumigatus (strain ATCC MYA-4609 / CBS 101355 / FGSC A1100 / Af293) (Neosartorya fumigata).